The chain runs to 394 residues: Elongation factor Tu 1 (394 aa).

One can recognise a tr-type G domain in the interval 10 to 204 (KPHVNVGTIG…ALDSYIPEPE (195 aa)). A G1 region spans residues 19 to 26 (GHVDHGKT). 19 to 26 (GHVDHGKT) is a GTP binding site. Thr-26 is a binding site for Mg(2+). The interval 60 to 64 (GITIN) is G2. The tract at residues 81-84 (DCPG) is G3. GTP is bound by residues 81 to 85 (DCPGH) and 136 to 139 (NKCD). The tract at residues 136–139 (NKCD) is G4. Residues 174–176 (SAL) form a G5 region.

It belongs to the TRAFAC class translation factor GTPase superfamily. Classic translation factor GTPase family. EF-Tu/EF-1A subfamily. In terms of assembly, monomer.

Its subcellular location is the cytoplasm. It catalyses the reaction GTP + H2O = GDP + phosphate + H(+). In terms of biological role, GTP hydrolase that promotes the GTP-dependent binding of aminoacyl-tRNA to the A-site of ribosomes during protein biosynthesis. This is Elongation factor Tu 1 from Shewanella sp. (strain MR-4).